The primary structure comprises 295 residues: Aspartate carbamoyltransferase catalytic subunit (295 aa).

2 residues coordinate carbamoyl phosphate: Arg49 and Thr50. Lys77 lines the L-aspartate pocket. Carbamoyl phosphate is bound by residues Arg99, His127, and Gln130. Positions 161 and 212 each coordinate L-aspartate. Positions 251 and 252 each coordinate carbamoyl phosphate.

It belongs to the aspartate/ornithine carbamoyltransferase superfamily. ATCase family. As to quaternary structure, heterododecamer (2C3:3R2) of six catalytic PyrB chains organized as two trimers (C3), and six regulatory PyrI chains organized as three dimers (R2).

The enzyme catalyses carbamoyl phosphate + L-aspartate = N-carbamoyl-L-aspartate + phosphate + H(+). The protein operates within pyrimidine metabolism; UMP biosynthesis via de novo pathway; (S)-dihydroorotate from bicarbonate: step 2/3. Functionally, catalyzes the condensation of carbamoyl phosphate and aspartate to form carbamoyl aspartate and inorganic phosphate, the committed step in the de novo pyrimidine nucleotide biosynthesis pathway. This is Aspartate carbamoyltransferase catalytic subunit from Aliarcobacter butzleri (strain RM4018) (Arcobacter butzleri).